The sequence spans 198 residues: Recombination protein RecR (198 aa).

The segment at 57 to 72 (CSVCGHITENDPCYIC) adopts a C4-type zinc-finger fold. A Toprim domain is found at 80–175 (SVICVVEDDK…KVTRLAQGLS (96 aa)).

Belongs to the RecR family.

Its function is as follows. May play a role in DNA repair. It seems to be involved in an RecBC-independent recombinational process of DNA repair. It may act with RecF and RecO. In Staphylococcus aureus (strain Mu3 / ATCC 700698), this protein is Recombination protein RecR.